Consider the following 245-residue polypeptide: Biosynthetic peptidoglycan transglycosylase (245 aa).

A helical membrane pass occupies residues 10–30 (FLALLFVVATLAQLWYLGQVL). Residues 224–245 (DPGTVPLPPPPEPTAPPEGNTQ) form a disordered region. Residues 226–239 (GTVPLPPPPEPTAP) show a composition bias toward pro residues.

The protein belongs to the glycosyltransferase 51 family.

It localises to the cell inner membrane. It catalyses the reaction [GlcNAc-(1-&gt;4)-Mur2Ac(oyl-L-Ala-gamma-D-Glu-L-Lys-D-Ala-D-Ala)](n)-di-trans,octa-cis-undecaprenyl diphosphate + beta-D-GlcNAc-(1-&gt;4)-Mur2Ac(oyl-L-Ala-gamma-D-Glu-L-Lys-D-Ala-D-Ala)-di-trans,octa-cis-undecaprenyl diphosphate = [GlcNAc-(1-&gt;4)-Mur2Ac(oyl-L-Ala-gamma-D-Glu-L-Lys-D-Ala-D-Ala)](n+1)-di-trans,octa-cis-undecaprenyl diphosphate + di-trans,octa-cis-undecaprenyl diphosphate + H(+). Its pathway is cell wall biogenesis; peptidoglycan biosynthesis. Functionally, peptidoglycan polymerase that catalyzes glycan chain elongation from lipid-linked precursors. The sequence is that of Biosynthetic peptidoglycan transglycosylase from Alcanivorax borkumensis (strain ATCC 700651 / DSM 11573 / NCIMB 13689 / SK2).